We begin with the raw amino-acid sequence, 207 residues long: 5-nitrosalicylic acid 1,2-dioxygenase (207 aa).

Residues 85 to 151 enclose the Cupin type-2 domain; the sequence is QLIHPGEEVT…GDKDTLMYVI (67 aa).

It catalyses the reaction 5-nitrosalicylate + O2 = 2-oxo-3-(5-oxofuran-2-ylidene)propanoate + nitrite + H(+). Dioxygenase that catalyzes the cleavage of the aromatic ring of 5-nitrosalicylate (5NSA) without prior removal of the nitro group in biodegradation of 5-nitroanthranilate. The protein is 5-nitrosalicylic acid 1,2-dioxygenase (naaB) of Bradyrhizobium sp.